We begin with the raw amino-acid sequence, 632 residues long: MWRVCARRVQSAVPRAGFRARWATLKGPRTGPAAVRCGSGIPSYGVRSLCGWSYGSATVPRNRILQQLLGSPSRRSYSLPPHQKVPLPSLSPTMQAGTIARWEKKEGEKISEGDLIAEVETDKATVGFESLEECYMAKILVPEGTRDVPVGSIICITVEKPQDIEAFKNYTLDSATAATQAAPAPAAAPAAAPAAPSASAPGSSYPVHMQIVLPALSPTMTMGTVQRWEKKVGEKLSEGDLLAEIETDKATIGFEVQEEGYLAKILVPEGTRDVPLGTPLCIIVEKQEDIAAFADYRPTEVTSLKPQAPPPVPPPVAAVPPIPQPLAPTPSAAPAGPKGRVFVSPLAKKLAAEKGIDLTQVKGTGPEGRIIKKDIDSFVPTKAAPAAAAAAPPGPRVAPTPAGVFIDIPISNIRRVIAQRLMQSKQTIPHYYLSVDVNMGEVLLVRKELNKMLEGKGKISVNDFIIKASALACLKVPEANSSWMDTVIRQNHVVDVSVAVSTPAGLITPIVFNAHIKGLETIASDVVSLASKAREGKLQPHEFQGGTFTISNLGMFGIKNFSAIINPPQACILAIGASEDKLIPADNEKGFDVASVMSVTLSCDHRVVDGAVGAQWLAEFKKYLEKPVTMLL.

A mitochondrion-targeting transit peptide spans 1-77 (MWRVCARRVQ…LLGSPSRRSY (77 aa)). Lipoyl-binding domains lie at 82–158 (HQKV…CITV) and 208–284 (HMQI…CIIV). Serine 91 is subject to Phosphoserine. Residues lysine 123 and lysine 249 each carry the N6-lipoyllysine modification. Positions 342-379 (FVSPLAKKLAAEKGIDLTQVKGTGPEGRIIKKDIDSFV) constitute a Peripheral subunit-binding (PSBD) domain. Residue arginine 446 coordinates CoA. The residue at position 451 (lysine 451) is an N6-acetyllysine. N6-succinyllysine is present on lysine 458. A CoA-binding site is contributed by serine 460. The residue at position 532 (lysine 532) is an N6-succinyllysine. Serine 551, asparagine 552, and glycine 576 together coordinate CoA. Catalysis depends on residues histidine 605 and aspartate 609.

This sequence belongs to the 2-oxoacid dehydrogenase family. As to quaternary structure, part of the pyruvate dehydrogenase complex (PDHc) that is a multi-enzyme complex composed of multiple copies of three enzymes, pyruvate dehydrogenase (subunits PDH1A and PDHB, E1 component), dihydrolipoamide acetyltransferase (DLAT, E2 component), and dihydrolipoamide dehydrogenase (DLD, E3 component) to which is added an additional protein the E3-binding protein (PDHX, E3BP). In terms of structural architecture, the E2 and E3BP components assemble into a 60meric central core with icosahedral symmetry. The central core is decorated with E1 and E3 proteins. Currently, two alternative models for the E2:E3BP stoichiometry are considered as being either 48:12 (E2(48)-E3BP(12)) or 40:20 (E2(40)-E3BP(20)). Interacts with PDK2 and PDK3. Interacts with SIRT4. Interacts with PDHB. (R)-lipoate is required as a cofactor. In terms of processing, delipoylated at Lys-123 and Lys-249 by SIRT4, delipoylation decreases the PHD complex activity. In terms of tissue distribution, expressed in flagella of epididymal sperm.

It localises to the mitochondrion matrix. It carries out the reaction N(6)-[(R)-dihydrolipoyl]-L-lysyl-[protein] + acetyl-CoA = N(6)-[(R)-S(8)-acetyldihydrolipoyl]-L-lysyl-[protein] + CoA. As part of the pyruvate dehydrogenase complex, catalyzes the transfers of an acetyl group to a lipoic acid moiety. The pyruvate dehydrogenase complex, catalyzes the overall conversion of pyruvate to acetyl-CoA and CO(2), and thereby links cytoplasmic glycolysis and the mitochondrial tricarboxylic acid (TCA) cycle. The protein is Dihydrolipoyllysine-residue acetyltransferase component of pyruvate dehydrogenase complex, mitochondrial of Rattus norvegicus (Rat).